Consider the following 435-residue polypeptide: Adenylosuccinate synthetase (435 aa).

GTP contacts are provided by residues 13 to 19 (GDEGKGK) and 41 to 43 (GHT). The active-site Proton acceptor is the D14. 2 residues coordinate Mg(2+): D14 and G41. IMP contacts are provided by residues 14–17 (DEGK), 39–42 (NAGH), T130, R144, Q225, T240, and R304. The active-site Proton donor is the H42. A substrate-binding site is contributed by 300–306 (ATTGRPR). GTP is bound by residues R306, 332-334 (KLD), and 419-421 (STG).

This sequence belongs to the adenylosuccinate synthetase family. As to quaternary structure, homodimer. It depends on Mg(2+) as a cofactor.

The protein localises to the cytoplasm. It carries out the reaction IMP + L-aspartate + GTP = N(6)-(1,2-dicarboxyethyl)-AMP + GDP + phosphate + 2 H(+). It participates in purine metabolism; AMP biosynthesis via de novo pathway; AMP from IMP: step 1/2. Its function is as follows. Plays an important role in the de novo pathway of purine nucleotide biosynthesis. Catalyzes the first committed step in the biosynthesis of AMP from IMP. This is Adenylosuccinate synthetase from Nitrosospira multiformis (strain ATCC 25196 / NCIMB 11849 / C 71).